Consider the following 327-residue polypeptide: MQIKRSIEKIPGGMMLVPLFLGALCHTFSPGAGKYFGSFTNGMITGTVPILAVWFFCMGASIKLSATGTVLRKSGTLVVTKIAVAWVVAAIASRIIPEHGVEVGFFAGLSTLALVAAMDMTNGGLYASIMQQYGTKEEAGAFVLMSLESGPLMTMIILGTAGIASFEPHVFVGAVLPFLVGFALGNLDPELREFFSKAVQTLIPFFAFALGNTIDLTVIAQTGLLGILLGVAVIIVTGIPLIIADKLIGGGDGTAGIAASSSAGAAVATPVLIAEMVPAFKPMAPAATSLVATAVIVTSILVPIITSIWSRKVKARAAKIEILGTVK.

Transmembrane regions (helical) follow at residues 10 to 30 (IPGGMMLVPLFLGALCHTFSP), 42 to 62 (GMITGTVPILAVWFFCMGASI), 73 to 93 (KSGTLVVTKIAVAWVVAAIAS), 95 to 115 (IIPEHGVEVGFFAGLSTLALV), 139 to 159 (AGAFVLMSLESGPLMTMIILG), 163 to 183 (IASFEPHVFVGAVLPFLVGFA), 199 to 219 (VQTLIPFFAFALGNTIDLTVI), 224 to 244 (LLGILLGVAVIIVTGIPLIIA), 254 to 274 (TAGIAASSSAGAAVATPVLIA), and 289 to 309 (SLVATAVIVTSILVPIITSIW).

The protein belongs to the KdgT transporter family.

The protein localises to the cell inner membrane. The catalysed reaction is 2-dehydro-3-deoxy-D-gluconate(in) + H(+)(in) = 2-dehydro-3-deoxy-D-gluconate(out) + H(+)(out). Catalyzes the proton-dependent uptake of 2-keto-3-deoxygluconate (KDG) into the cell. In Escherichia coli O139:H28 (strain E24377A / ETEC), this protein is 2-keto-3-deoxygluconate permease.